A 141-amino-acid polypeptide reads, in one-letter code: Nucleoside diphosphate kinase (141 aa).

Residues lysine 11, phenylalanine 59, arginine 87, threonine 93, arginine 104, and asparagine 114 each contribute to the ATP site. Catalysis depends on histidine 117, which acts as the Pros-phosphohistidine intermediate.

Belongs to the NDK family. As to quaternary structure, homotetramer. It depends on Mg(2+) as a cofactor.

The protein localises to the cytoplasm. The enzyme catalyses a 2'-deoxyribonucleoside 5'-diphosphate + ATP = a 2'-deoxyribonucleoside 5'-triphosphate + ADP. It catalyses the reaction a ribonucleoside 5'-diphosphate + ATP = a ribonucleoside 5'-triphosphate + ADP. Functionally, major role in the synthesis of nucleoside triphosphates other than ATP. The ATP gamma phosphate is transferred to the NDP beta phosphate via a ping-pong mechanism, using a phosphorylated active-site intermediate. This is Nucleoside diphosphate kinase from Nitrosospira multiformis (strain ATCC 25196 / NCIMB 11849 / C 71).